Reading from the N-terminus, the 282-residue chain is High mobility group nucleosome-binding domain-containing protein 5 (282 aa).

The tract at residues 1-282 is disordered; that stretch reads MPKRKAAGQG…GKKEEPQSIV (282 aa). Thr31 is modified (phosphothreonine). Basic residues predominate over residues 37–46; that stretch reads KRTSSSRKMK. A Glycyl lysine isopeptide (Lys-Gly) (interchain with G-Cter in SUMO2) cross-link involves residue Lys67. Residue Tyr76 is modified to Phosphotyrosine. Over residues 81-119 the composition is skewed to basic and acidic residues; the sequence is KNGEAKITEAPASEKEIVEVKEENIEDATEKGGEKKEAV. Position 93 is a phosphoserine (Ser93). A Glycyl lysine isopeptide (Lys-Gly) (interchain with G-Cter in SUMO1); alternate cross-link involves residue Lys101. A Glycyl lysine isopeptide (Lys-Gly) (interchain with G-Cter in SUMO2); alternate cross-link involves residue Lys101. Lys124 is covalently cross-linked (Glycyl lysine isopeptide (Lys-Gly) (interchain with G-Cter in SUMO2)). Residues 125-138 are compositionally biased toward acidic residues; that stretch reads NEEEDQKEDEEDQN. 2 stretches are compositionally biased toward basic and acidic residues: residues 139–152 and 158–256; these read EEKGEAGKEDKDEK and KEDK…KEDL. The span at 257–270 shows a compositional bias: acidic residues; the sequence is KEEEEGKEEDEIKE. The segment covering 271 to 282 has biased composition (basic and acidic residues); the sequence is DDGKKEEPQSIV.

Belongs to the HMGN family. In terms of tissue distribution, ubiquitously expressed.

The protein resides in the nucleus. Preferentially binds to euchromatin and modulates cellular transcription by counteracting linker histone-mediated chromatin compaction. The protein is High mobility group nucleosome-binding domain-containing protein 5 (HMGN5) of Homo sapiens (Human).